Reading from the N-terminus, the 212-residue chain is Interleukin-6 (212 aa).

An N-terminal signal peptide occupies residues 1-29; the sequence is MNSFSTSAFGPVAFSLGLLLVLPAAFPAP. Residues Cys72 and Cys78 are joined by a disulfide bond. Asn73 is a glycosylation site (N-linked (GlcNAc...) asparagine). The residue at position 81 (Ser81) is a Phosphoserine; by FAM20C. Cys101 and Cys111 are joined by a disulfide.

This sequence belongs to the IL-6 superfamily. Component of a hexamer of two molecules each of IL6, IL6R and IL6ST; first binds to IL6R to associate with the signaling subunit IL6ST. Interacts with IL6R (via the N-terminal ectodomain); this interaction may be affected by IL6R-binding with SORL1, hence decreasing IL6 cis signaling. Interacts with SORL1 (via the N-terminal ectodomain); this interaction leads to IL6 internalization and lysosomal degradation. May form a trimeric complex with the soluble SORL1 ectodomain and soluble IL6R receptor; this interaction might stabilize circulating IL6, hence promoting IL6 trans signaling. Post-translationally, N- and O-glycosylated. As to expression, produced by skeletal muscle.

It localises to the secreted. Its function is as follows. Cytokine with a wide variety of biological functions in immunity, tissue regeneration, and metabolism. Binds to IL6R, then the complex associates to the signaling subunit IL6ST/gp130 to trigger the intracellular IL6-signaling pathway. The interaction with the membrane-bound IL6R and IL6ST stimulates 'classic signaling', whereas the binding of IL6 and soluble IL6R to IL6ST stimulates 'trans-signaling'. Alternatively, 'cluster signaling' occurs when membrane-bound IL6:IL6R complexes on transmitter cells activate IL6ST receptors on neighboring receiver cells. In terms of biological role, IL6 is a potent inducer of the acute phase response. Rapid production of IL6 contributes to host defense during infection and tissue injury, but excessive IL6 synthesis is involved in disease pathology. In the innate immune response, is synthesized by myeloid cells, such as macrophages and dendritic cells, upon recognition of pathogens through toll-like receptors (TLRs) at the site of infection or tissue injury. In the adaptive immune response, is required for the differentiation of B cells into immunoglobulin-secreting cells. Plays a major role in the differentiation of CD4(+) T cell subsets. Essential factor for the development of T follicular helper (Tfh) cells that are required for the induction of germinal-center formation. Required to drive naive CD4(+) T cells to the Th17 lineage. Also required for proliferation of myeloma cells and the survival of plasmablast cells. Functionally, acts as an essential factor in bone homeostasis and on vessels directly or indirectly by induction of VEGF, resulting in increased angiogenesis activity and vascular permeability. Induces, through 'trans-signaling' and synergistically with IL1B and TNF, the production of VEGF. Involved in metabolic controls, is discharged into the bloodstream after muscle contraction increasing lipolysis and improving insulin resistance. 'Trans-signaling' in central nervous system also regulates energy and glucose homeostasis. Mediates, through GLP-1, crosstalk between insulin-sensitive tissues, intestinal L cells and pancreatic islets to adapt to changes in insulin demand. Also acts as a myokine. Plays a protective role during liver injury, being required for maintenance of tissue regeneration. Also has a pivotal role in iron metabolism by regulating HAMP/hepcidin expression upon inflammation or bacterial infection. Through activation of IL6ST-YAP-NOTCH pathway, induces inflammation-induced epithelial regeneration. The polypeptide is Interleukin-6 (Homo sapiens (Human)).